The primary structure comprises 328 residues: Putative lipase LIH1 (328 aa).

Ser-181 functions as the Nucleophile in the catalytic mechanism. Active-site charge relay system residues include Asp-253 and His-315.

It belongs to the AB hydrolase superfamily. Lipase family.

The catalysed reaction is a triacylglycerol + H2O = a diacylglycerol + a fatty acid + H(+). Its function is as follows. Lipases catalyze the hydrolysis of the ester bond of tri-, di- and monoglycerides of long-chain fatty acids into fatty acids and glycerol. The sequence is that of Putative lipase LIH1 from Saccharomyces cerevisiae (strain ATCC 204508 / S288c) (Baker's yeast).